Here is a 170-residue protein sequence, read N- to C-terminus: Adenine phosphoribosyltransferase (170 aa).

Belongs to the purine/pyrimidine phosphoribosyltransferase family. As to quaternary structure, homodimer.

The protein localises to the cytoplasm. The catalysed reaction is AMP + diphosphate = 5-phospho-alpha-D-ribose 1-diphosphate + adenine. The protein operates within purine metabolism; AMP biosynthesis via salvage pathway; AMP from adenine: step 1/1. In terms of biological role, catalyzes a salvage reaction resulting in the formation of AMP, that is energically less costly than de novo synthesis. This is Adenine phosphoribosyltransferase from Flavobacterium johnsoniae (strain ATCC 17061 / DSM 2064 / JCM 8514 / BCRC 14874 / CCUG 350202 / NBRC 14942 / NCIMB 11054 / UW101) (Cytophaga johnsonae).